Reading from the N-terminus, the 254-residue chain is Alcohol dehydrogenase 1 (254 aa).

An NAD(+)-binding site is contributed by 10–33 (FVAGLGGIGFDTSREIVKKGPKNL). Residue S138 participates in substrate binding. Residue Y151 is the Proton acceptor of the active site.

This sequence belongs to the short-chain dehydrogenases/reductases (SDR) family. Homodimer.

The enzyme catalyses a primary alcohol + NAD(+) = an aldehyde + NADH + H(+). It carries out the reaction a secondary alcohol + NAD(+) = a ketone + NADH + H(+). The sequence is that of Alcohol dehydrogenase 1 (Adh1) from Drosophila mojavensis (Fruit fly).